A 1766-amino-acid chain; its full sequence is E3 ubiquitin-protein ligase listerin (1766 aa).

Residues Met1–Gly11 show a composition bias toward basic residues. Residues Met1–Arg20 are disordered. HEAT repeat units lie at residues Lys100 to Lys138, Val193 to Ala231, Ala292 to Asp329, Asn335 to Pro372, and Glu512 to Glu549. The interval Lys529–Asp567 is disordered. The segment covering Glu551–Ser566 has biased composition (basic and acidic residues). 6 HEAT repeats span residues Glu606 to Glu644, Lys672 to Val710, Gln916 to Glu953, His1184 to Tyr1227, Gly1314 to Lys1355, and Ser1406 to Leu1447. The segment at Cys1715–Arg1762 adopts an RING-type zinc-finger fold.

Belongs to the LTN1 family. As to quaternary structure, component of the ribosome quality control complex (RQC), composed of at least the E3 ubiquitin ligase LTN1 and NEMF associated with the 60S ribosomal subunit. The complex probably also contains TCF25 as well as VCP/p97 and its ubiquitin-binding cofactors.

The protein resides in the cytoplasm. It localises to the cytosol. It carries out the reaction S-ubiquitinyl-[E2 ubiquitin-conjugating enzyme]-L-cysteine + [acceptor protein]-L-lysine = [E2 ubiquitin-conjugating enzyme]-L-cysteine + N(6)-ubiquitinyl-[acceptor protein]-L-lysine.. It participates in protein modification; protein ubiquitination. In terms of biological role, E3 ubiquitin-protein ligase component of the ribosome quality control complex (RQC), a ribosome-associated complex that mediates ubiquitination and extraction of incompletely synthesized nascent chains for proteasomal degradation. Within the RQC complex, LTN1 is recruited to stalled 60S ribosomal subunits by NEMF and mediates ubiquitination of stalled nascent chains. Ubiquitination leads to VCP/p97 recruitment for extraction and degradation of the incomplete translation product. In Gallus gallus (Chicken), this protein is E3 ubiquitin-protein ligase listerin (LTN1).